The sequence spans 477 residues: 3-isopropylmalate dehydratase large subunit (477 aa).

[4Fe-4S] cluster-binding residues include C352, C413, and C416.

Belongs to the aconitase/IPM isomerase family. LeuC type 1 subfamily. In terms of assembly, heterodimer of LeuC and LeuD. The cofactor is [4Fe-4S] cluster.

It catalyses the reaction (2R,3S)-3-isopropylmalate = (2S)-2-isopropylmalate. The protein operates within amino-acid biosynthesis; L-leucine biosynthesis; L-leucine from 3-methyl-2-oxobutanoate: step 2/4. Its function is as follows. Catalyzes the isomerization between 2-isopropylmalate and 3-isopropylmalate, via the formation of 2-isopropylmaleate. The sequence is that of 3-isopropylmalate dehydratase large subunit from Pseudomonas putida (strain ATCC 47054 / DSM 6125 / CFBP 8728 / NCIMB 11950 / KT2440).